Reading from the N-terminus, the 281-residue chain is Small ribosomal subunit protein uS2 (281 aa).

Belongs to the universal ribosomal protein uS2 family.

The polypeptide is Small ribosomal subunit protein uS2 (rpsB) (Chlamydia muridarum (strain MoPn / Nigg)).